A 333-amino-acid polypeptide reads, in one-letter code: Beta-ketoacyl-[acyl-carrier-protein] synthase III (333 aa).

Catalysis depends on residues cysteine 116 and histidine 258. The tract at residues 259 to 263 (QANKR) is ACP-binding. Asparagine 288 is a catalytic residue.

The protein belongs to the thiolase-like superfamily. FabH family. As to quaternary structure, homodimer.

It is found in the cytoplasm. The catalysed reaction is malonyl-[ACP] + acetyl-CoA + H(+) = 3-oxobutanoyl-[ACP] + CO2 + CoA. Its pathway is lipid metabolism; fatty acid biosynthesis. Functionally, catalyzes the condensation reaction of fatty acid synthesis by the addition to an acyl acceptor of two carbons from malonyl-ACP. Catalyzes the first condensation reaction which initiates fatty acid synthesis and may therefore play a role in governing the total rate of fatty acid production. Possesses both acetoacetyl-ACP synthase and acetyl transacylase activities. Its substrate specificity determines the biosynthesis of branched-chain and/or straight-chain of fatty acids. This Koribacter versatilis (strain Ellin345) protein is Beta-ketoacyl-[acyl-carrier-protein] synthase III.